We begin with the raw amino-acid sequence, 187 residues long: ATP synthase subunit b (187 aa).

The chain crosses the membrane as a helical span at residues 32–52 (NILDTNLINLAIIITVLFVFG).

It belongs to the ATPase B chain family. F-type ATPases have 2 components, F(1) - the catalytic core - and F(0) - the membrane proton channel. F(1) has five subunits: alpha(3), beta(3), gamma(1), delta(1), epsilon(1). F(0) has four main subunits: a(1), b(1), b'(1) and c(10-14). The alpha and beta chains form an alternating ring which encloses part of the gamma chain. F(1) is attached to F(0) by a central stalk formed by the gamma and epsilon chains, while a peripheral stalk is formed by the delta, b and b' chains.

Its subcellular location is the cellular thylakoid membrane. Functionally, f(1)F(0) ATP synthase produces ATP from ADP in the presence of a proton or sodium gradient. F-type ATPases consist of two structural domains, F(1) containing the extramembraneous catalytic core and F(0) containing the membrane proton channel, linked together by a central stalk and a peripheral stalk. During catalysis, ATP synthesis in the catalytic domain of F(1) is coupled via a rotary mechanism of the central stalk subunits to proton translocation. In terms of biological role, component of the F(0) channel, it forms part of the peripheral stalk, linking F(1) to F(0). The sequence is that of ATP synthase subunit b from Trichormus variabilis (strain ATCC 29413 / PCC 7937) (Anabaena variabilis).